The chain runs to 99 residues: MKSIDPRHYDVIVAPVVTEKSTMASEHNKVVFKVQGGATKPQIKEAVEKLFDVKVKSVNTLVRKGKTKAFRGTFGTQSDVKRAVVTLEEGHRIDVTTGL.

As to quaternary structure, contacts protein L29, and trigger factor when it is bound to the ribosome. Part of the 50S ribosomal subunit.

One of the early assembly proteins it binds 23S rRNA. One of the proteins that surrounds the polypeptide exit tunnel on the outside of the ribosome. Forms the main docking site for trigger factor binding to the ribosome. This Rhodopseudomonas palustris (strain ATCC BAA-98 / CGA009) protein is Large ribosomal subunit protein uL23.